A 283-amino-acid chain; its full sequence is Elongation factor Ts (283 aa).

The tract at residues 80 to 83 is involved in Mg(2+) ion dislocation from EF-Tu; it reads TDFV.

Belongs to the EF-Ts family.

Its subcellular location is the cytoplasm. Functionally, associates with the EF-Tu.GDP complex and induces the exchange of GDP to GTP. It remains bound to the aminoacyl-tRNA.EF-Tu.GTP complex up to the GTP hydrolysis stage on the ribosome. The protein is Elongation factor Ts of Salmonella choleraesuis (strain SC-B67).